Here is a 170-residue protein sequence, read N- to C-terminus: Lipoprotein signal peptidase (170 aa).

A run of 3 helical transmembrane segments spans residues 12 to 32, 67 to 87, and 94 to 113; these read WYWV…WVLS, WQRW…SVWL, and MWRL…GNLI. Residues Asp123 and Asp141 contribute to the active site. Residues 139 to 159 traverse the membrane as a helical segment; that stretch reads IADSAICVGAGLIILDSFVAG.

Belongs to the peptidase A8 family.

It localises to the cell inner membrane. The enzyme catalyses Release of signal peptides from bacterial membrane prolipoproteins. Hydrolyzes -Xaa-Yaa-Zaa-|-(S,diacylglyceryl)Cys-, in which Xaa is hydrophobic (preferably Leu), and Yaa (Ala or Ser) and Zaa (Gly or Ala) have small, neutral side chains.. It functions in the pathway protein modification; lipoprotein biosynthesis (signal peptide cleavage). Its function is as follows. This protein specifically catalyzes the removal of signal peptides from prolipoproteins. The protein is Lipoprotein signal peptidase of Shewanella pealeana (strain ATCC 700345 / ANG-SQ1).